A 576-amino-acid polypeptide reads, in one-letter code: Trehalase 2 (576 aa).

It belongs to the glycosyl hydrolase 15 family.

The enzyme catalyses alpha,alpha-trehalose + H2O = alpha-D-glucose + beta-D-glucose. The protein operates within glycan degradation; trehalose degradation; D-glucose from alpha,alpha-trehalose: step 1/1. In terms of biological role, catalyzes the hydrolysis of alpha,alpha-trehalose into two molecules of D-glucose. The polypeptide is Trehalase 2 (treH2) (Sulfolobus acidocaldarius (strain ATCC 33909 / DSM 639 / JCM 8929 / NBRC 15157 / NCIMB 11770)).